Here is a 49-residue protein sequence, read N- to C-terminus: Large ribosomal subunit protein bL33C (49 aa).

The protein belongs to the bacterial ribosomal protein bL33 family.

In Lactococcus lactis subsp. cremoris (strain MG1363), this protein is Large ribosomal subunit protein bL33C.